We begin with the raw amino-acid sequence, 306 residues long: D-glucosamine-6-phosphate 4-epimerase (306 aa).

Residues 19–153 (DIPGVKTAEK…TGSNYRVQDL (135 aa)) enclose the SIS domain. Catalysis depends on Glu200, which acts as the Proton acceptor. His216 serves as the catalytic Proton donor. Arg296 acts as the Proton acceptor in catalysis.

It belongs to the PGI/PMI family.

The catalysed reaction is D-glucosamine 6-phosphate = D-galactosamine 6-phosphate. Functionally, involved in the synthesis of UDP-N-acetylgalactosamine (UDP-GalNAc). Catalyzes the conversion of glucosamine-6-phosphate (GlcN-6-P) to galactosamine-6-phosphate (GalN-6-P). This Sulfolobus acidocaldarius (strain ATCC 33909 / DSM 639 / JCM 8929 / NBRC 15157 / NCIMB 11770) protein is D-glucosamine-6-phosphate 4-epimerase.